The chain runs to 613 residues: Dihydroxy-acid dehydratase (613 aa).

Aspartate 81 lines the Mg(2+) pocket. Residue cysteine 122 coordinates [2Fe-2S] cluster. 2 residues coordinate Mg(2+): aspartate 123 and lysine 124. Lysine 124 carries the post-translational modification N6-carboxylysine. Cysteine 195 lines the [2Fe-2S] cluster pocket. Glutamate 491 provides a ligand contact to Mg(2+). The active-site Proton acceptor is serine 517.

The protein belongs to the IlvD/Edd family. Homodimer. [2Fe-2S] cluster is required as a cofactor. Mg(2+) serves as cofactor.

It catalyses the reaction (2R)-2,3-dihydroxy-3-methylbutanoate = 3-methyl-2-oxobutanoate + H2O. The enzyme catalyses (2R,3R)-2,3-dihydroxy-3-methylpentanoate = (S)-3-methyl-2-oxopentanoate + H2O. It functions in the pathway amino-acid biosynthesis; L-isoleucine biosynthesis; L-isoleucine from 2-oxobutanoate: step 3/4. It participates in amino-acid biosynthesis; L-valine biosynthesis; L-valine from pyruvate: step 3/4. Functions in the biosynthesis of branched-chain amino acids. Catalyzes the dehydration of (2R,3R)-2,3-dihydroxy-3-methylpentanoate (2,3-dihydroxy-3-methylvalerate) into 2-oxo-3-methylpentanoate (2-oxo-3-methylvalerate) and of (2R)-2,3-dihydroxy-3-methylbutanoate (2,3-dihydroxyisovalerate) into 2-oxo-3-methylbutanoate (2-oxoisovalerate), the penultimate precursor to L-isoleucine and L-valine, respectively. The chain is Dihydroxy-acid dehydratase from Hyphomonas neptunium (strain ATCC 15444).